The primary structure comprises 556 residues: Pumilio homolog 11 (556 aa).

The PUM-HD domain maps to 215 to 556; it reads GGSRELDGSA…RIFSKNLWKK (342 aa). 8 Pumilio repeats span residues 238 to 276, 277 to 313, 316 to 351, 353 to 388, 389 to 424, 425 to 459, 460 to 495, and 496 to 531; these read SMVD…IIFK, EVIN…ILIR, SKPG…SLVK, ALVP…FILE, AATK…KLVD, EISR…VLFE, LRGN…VNEL, and VSVL…SLVE.

It is found in the cytoplasm. In terms of biological role, sequence-specific RNA-binding protein that regulates translation and mRNA stability by binding the 3'-UTR of target mRNAs. This Arabidopsis thaliana (Mouse-ear cress) protein is Pumilio homolog 11 (APUM11).